We begin with the raw amino-acid sequence, 606 residues long: Dihydroxy-acid dehydratase ilvC, mitochondrial (606 aa).

Position 84 (cysteine 84) interacts with [2Fe-2S] cluster. Aspartate 116 provides a ligand contact to Mg(2+). Cysteine 157 contacts [2Fe-2S] cluster. Residue aspartate 158 coordinates Mg(2+). Position 232 (cysteine 232) interacts with [2Fe-2S] cluster. Position 485 (glutamate 485) interacts with Mg(2+). Serine 511 acts as the Proton acceptor in catalysis.

The protein belongs to the IlvD/Edd family. It depends on [2Fe-2S] cluster as a cofactor. Mg(2+) is required as a cofactor.

It localises to the mitochondrion. It catalyses the reaction (2R)-2,3-dihydroxy-3-methylbutanoate = 3-methyl-2-oxobutanoate + H2O. It carries out the reaction (2R,3R)-2,3-dihydroxy-3-methylpentanoate = (S)-3-methyl-2-oxopentanoate + H2O. It participates in amino-acid biosynthesis; L-isoleucine biosynthesis; L-isoleucine from 2-oxobutanoate: step 3/4. It functions in the pathway amino-acid biosynthesis; L-valine biosynthesis; L-valine from pyruvate: step 3/4. With respect to regulation, DHAD activity is inhibited in dose-dependent manner by 2-hydroxy-3-methylbutyric acid with an IC(50) of about 8 mM. Dihydroxyacid dehydratase that catalyzes the third step in the common pathway leading to biosynthesis of branched-chain amino acids. Catalyzes the dehydration of (2R,3R)-2,3-dihydroxy-3-methylpentanoate (2,3-dihydroxy-3-methylvalerate) into 2-oxo-3-methylpentanoate (2-oxo-3-methylvalerate) and of (2R)-2,3-dihydroxy-3-methylbutanoate (2,3-dihydroxyisovalerate) into 2-oxo-3-methylbutanoate (2-oxoisovalerate), the penultimate precursor to L-isoleucine and L-valine, respectively. IlvC and the branched-chain amino acid biosynthesis are crucial for virulence and may be a potential target to develop antifungal agents. In Aspergillus fumigatus (strain ATCC MYA-4609 / CBS 101355 / FGSC A1100 / Af293) (Neosartorya fumigata), this protein is Dihydroxy-acid dehydratase ilvC, mitochondrial.